Reading from the N-terminus, the 392-residue chain is DNA replication and repair protein RecF (392 aa).

ATP is bound at residue 30–37 (GRNGFGKT).

This sequence belongs to the RecF family.

The protein resides in the cytoplasm. Its function is as follows. The RecF protein is involved in DNA metabolism; it is required for DNA replication and normal SOS inducibility. RecF binds preferentially to single-stranded, linear DNA. It also seems to bind ATP. The polypeptide is DNA replication and repair protein RecF (Corynebacterium aurimucosum (strain ATCC 700975 / DSM 44827 / CIP 107346 / CN-1) (Corynebacterium nigricans)).